A 94-amino-acid chain; its full sequence is Large ribosomal subunit protein bL31 (94 aa).

Positions 65–94 (YGMADSENDSTDKKKTTNEKKVSDSPSKES) are disordered. Basic and acidic residues predominate over residues 74–94 (STDKKKTTNEKKVSDSPSKES).

It belongs to the bacterial ribosomal protein bL31 family. Type A subfamily. As to quaternary structure, part of the 50S ribosomal subunit.

Binds the 23S rRNA. This Prochlorococcus marinus (strain MIT 9211) protein is Large ribosomal subunit protein bL31.